The primary structure comprises 99 residues: NADH-quinone oxidoreductase subunit K (99 aa).

The next 3 membrane-spanning stretches (helical) occupy residues 3–23 (PANYLILSGLLFTIGATGVLV), 28–48 (IVVFMSIELMLNAVNLTLVTF), and 62–82 (FFVMVVAAAEVVVGLAIILAI).

This sequence belongs to the complex I subunit 4L family. In terms of assembly, NDH-1 is composed of 14 different subunits. Subunits NuoA, H, J, K, L, M, N constitute the membrane sector of the complex.

The protein resides in the cell membrane. It catalyses the reaction a quinone + NADH + 5 H(+)(in) = a quinol + NAD(+) + 4 H(+)(out). NDH-1 shuttles electrons from NADH, via FMN and iron-sulfur (Fe-S) centers, to quinones in the respiratory chain. The immediate electron acceptor for the enzyme in this species is believed to be a menaquinone. Couples the redox reaction to proton translocation (for every two electrons transferred, four hydrogen ions are translocated across the cytoplasmic membrane), and thus conserves the redox energy in a proton gradient. In Parafrankia sp. (strain EAN1pec), this protein is NADH-quinone oxidoreductase subunit K.